The sequence spans 475 residues: Ribulose bisphosphate carboxylase large chain (475 aa).

Residues 1–2 (MS) constitute a propeptide that is removed on maturation. Proline 3 is subject to N-acetylproline. At lysine 14 the chain carries N6,N6,N6-trimethyllysine. Positions 123 and 173 each coordinate substrate. Lysine 175 functions as the Proton acceptor in the catalytic mechanism. Lysine 177 lines the substrate pocket. Residues lysine 201, aspartate 203, and glutamate 204 each contribute to the Mg(2+) site. Position 201 is an N6-carboxylysine (lysine 201). Histidine 294 acts as the Proton acceptor in catalysis. Arginine 295, histidine 327, and serine 379 together coordinate substrate.

The protein belongs to the RuBisCO large chain family. Type I subfamily. Heterohexadecamer of 8 large chains and 8 small chains; disulfide-linked. The disulfide link is formed within the large subunit homodimers. Mg(2+) is required as a cofactor. The disulfide bond which can form in the large chain dimeric partners within the hexadecamer appears to be associated with oxidative stress and protein turnover.

Its subcellular location is the plastid. The protein resides in the chloroplast. The catalysed reaction is 2 (2R)-3-phosphoglycerate + 2 H(+) = D-ribulose 1,5-bisphosphate + CO2 + H2O. The enzyme catalyses D-ribulose 1,5-bisphosphate + O2 = 2-phosphoglycolate + (2R)-3-phosphoglycerate + 2 H(+). Its function is as follows. RuBisCO catalyzes two reactions: the carboxylation of D-ribulose 1,5-bisphosphate, the primary event in carbon dioxide fixation, as well as the oxidative fragmentation of the pentose substrate in the photorespiration process. Both reactions occur simultaneously and in competition at the same active site. The chain is Ribulose bisphosphate carboxylase large chain from Angiopteris evecta (Mule's foot fern).